A 156-amino-acid polypeptide reads, in one-letter code: Transcription inhibitor protein Gfh1 (156 aa).

A coiled-coil region spans residues 1 to 74 (MAREVKLTKA…LEDILSRAVI (74 aa)). Residues E20 and E24 each coordinate Zn(2+).

The protein belongs to the GreA/GreB family. As to quaternary structure, interacts with RNAP.

Functionally, inhibits all catalytic activities of RNA polymerase (RNAP) by partially occluding its substrate-binding site and preventing NTP binding. The sequence is that of Transcription inhibitor protein Gfh1 (gfh1) from Thermus thermophilus (strain ATCC 27634 / DSM 579 / HB8).